Consider the following 1274-residue polypeptide: Myosin-binding protein C, cardiac-type (1274 aa).

Met1 is subject to N-acetylmethionine. One can recognise an Ig-like C2-type 1 domain in the interval 8–95; it reads PVSAFTKKPR…SKVKFDLKVT (88 aa). At Ser47 the chain carries Phosphoserine. Positions 95 to 104 are enriched in basic and acidic residues; it reads TEPAPPEKAE. The interval 95–153 is disordered; it reads TEPAPPEKAESAVAPTSMEAPETPKEVPALATQLEGNVSSPEGSVSVTQDGSVAGSQGA. Thr117 carries the post-translational modification Phosphothreonine. A compositionally biased stretch (polar residues) spans 128–149; the sequence is LEGNVSSPEGSVSVTQDGSVAG. Residues 157-259 enclose the Ig-like C2-type 2 domain; it reads PIGLFLMRPQ…KFDSCNFNLT (103 aa). Positions 212, 214, 227, and 229 each coordinate Zn(2+). Position 279 is a phosphoserine (Ser279). The residue at position 287 (Thr287) is a Phosphothreonine; by PKA and PKC. Ser288 is modified (phosphoserine). Ser307 is modified (phosphoserine; by PKA). A phosphoserine mark is found at Ser312 and Ser427. Ig-like C2-type domains are found at residues 361–452 and 452–546; these read KKST…VKEP and PPVL…KKLE. Cys436 and Cys443 are disulfide-bonded. A phosphoserine mark is found at Ser459 and Ser550. Thr607 carries the post-translational modification Phosphothreonine. An Ig-like C2-type 5 domain is found at 645–765; sequence PKIHLDCPGS…PVGEDQVNLT (121 aa). Fibronectin type-III domains are found at residues 774-870 and 872-967; these read APAA…IGPP and EPTH…VQEI. Residues 971-1059 enclose the Ig-like C2-type 6 domain; sequence PRLQLPRHLR…ENMEDKATLV (89 aa). Positions 1068 to 1163 constitute a Fibronectin type-III 3 domain; sequence PPLDIRVVET…TKEPIFIPRP (96 aa). Residues 1181-1269 form the Ig-like C2-type 7 domain; it reads PSFTQPLTNR…GEAQCECRLE (89 aa). Arg1241 is subject to Omega-N-methylarginine.

It belongs to the immunoglobulin superfamily. MyBP family. Post-translationally, substrate for phosphorylation by PKA and PKC. Reversible phosphorylation appears to modulate contraction. Polyubiquitinated.

Its function is as follows. Thick filament-associated protein located in the crossbridge region of vertebrate striated muscle a bands. In vitro it binds MHC, F-actin and native thin filaments, and modifies the activity of actin-activated myosin ATPase. It may modulate muscle contraction or may play a more structural role. This chain is Myosin-binding protein C, cardiac-type (Mybpc3), found in Rattus norvegicus (Rat).